Reading from the N-terminus, the 397-residue chain is Formate-dependent phosphoribosylglycinamide formyltransferase (397 aa).

Residues 21–22 and glutamate 81 contribute to the N(1)-(5-phospho-beta-D-ribosyl)glycinamide site; that span reads EL. Residues arginine 113, lysine 154, 194 to 197, and glutamate 202 each bind ATP; that span reads EEYV. The ATP-grasp domain maps to 118-313; it reads KLAAEKVKVP…EFQIHVRSAL (196 aa). Positions 272 and 284 each coordinate Mg(2+). N(1)-(5-phospho-beta-D-ribosyl)glycinamide-binding positions include aspartate 291, lysine 361, and 368-369; that span reads RR.

This sequence belongs to the PurK/PurT family. As to quaternary structure, homodimer.

The enzyme catalyses N(1)-(5-phospho-beta-D-ribosyl)glycinamide + formate + ATP = N(2)-formyl-N(1)-(5-phospho-beta-D-ribosyl)glycinamide + ADP + phosphate + H(+). It participates in purine metabolism; IMP biosynthesis via de novo pathway; N(2)-formyl-N(1)-(5-phospho-D-ribosyl)glycinamide from N(1)-(5-phospho-D-ribosyl)glycinamide (formate route): step 1/1. In terms of biological role, involved in the de novo purine biosynthesis. Catalyzes the transfer of formate to 5-phospho-ribosyl-glycinamide (GAR), producing 5-phospho-ribosyl-N-formylglycinamide (FGAR). Formate is provided by PurU via hydrolysis of 10-formyl-tetrahydrofolate. This chain is Formate-dependent phosphoribosylglycinamide formyltransferase, found in Sulfurisphaera tokodaii (strain DSM 16993 / JCM 10545 / NBRC 100140 / 7) (Sulfolobus tokodaii).